The sequence spans 100 residues: Urease subunit gamma (100 aa).

Belongs to the urease gamma subunit family. Heterotrimer of UreA (gamma), UreB (beta) and UreC (alpha) subunits. Three heterotrimers associate to form the active enzyme.

It is found in the cytoplasm. The enzyme catalyses urea + 2 H2O + H(+) = hydrogencarbonate + 2 NH4(+). Its pathway is nitrogen metabolism; urea degradation; CO(2) and NH(3) from urea (urease route): step 1/1. The sequence is that of Urease subunit gamma from Prochlorococcus marinus (strain AS9601).